A 110-amino-acid chain; its full sequence is Large ribosomal subunit protein uL22 (110 aa).

Belongs to the universal ribosomal protein uL22 family. As to quaternary structure, part of the 50S ribosomal subunit.

This protein binds specifically to 23S rRNA; its binding is stimulated by other ribosomal proteins, e.g. L4, L17, and L20. It is important during the early stages of 50S assembly. It makes multiple contacts with different domains of the 23S rRNA in the assembled 50S subunit and ribosome. Functionally, the globular domain of the protein is located near the polypeptide exit tunnel on the outside of the subunit, while an extended beta-hairpin is found that lines the wall of the exit tunnel in the center of the 70S ribosome. The chain is Large ribosomal subunit protein uL22 from Ruthia magnifica subsp. Calyptogena magnifica.